Reading from the N-terminus, the 718-residue chain is Auxin response factor 2 (718 aa).

Positions 1–24 (MVGIDLNTVEEEEDEEEGGATGTV) are disordered. The span at 8–18 (TVEEEEDEEEG) shows a compositional bias: acidic residues. The TF-B3 DNA-binding region spans 147 to 249 (FCKTLTASDT…ELRLGVRRAA (103 aa)).

It belongs to the ARF family. In terms of assembly, homo and heterodimers. Expressed in roots, culms, leaves and young panicles.

Its subcellular location is the nucleus. Its function is as follows. Auxin response factors (ARFs) are transcriptional factors that bind specifically to the DNA sequence 5'-TGTCTC-3' found in the auxin-responsive promoter elements (AuxREs). The protein is Auxin response factor 2 (ARF2) of Oryza sativa subsp. japonica (Rice).